The sequence spans 228 residues: Ephrin-A5 (228 aa).

The signal sequence occupies residues 1-20; the sequence is MLHVEMLTLLFLVLWMCVFS. One can recognise an Ephrin RBD domain in the interval 29-162; that stretch reads ADRYAVYWNS…KLKVFVRPTN (134 aa). N-linked (GlcNAc...) asparagine glycosylation is present at Asn37. 2 disulfide bridges follow: Cys62–Cys102 and Cys90–Cys151. The tract at residues 186–205 is disordered; sequence EPADDTVHESAEPSRGENAA. A compositionally biased stretch (basic and acidic residues) spans 190-200; it reads DTVHESAEPSR. The GPI-anchor amidated asparagine moiety is linked to residue Asn203. A propeptide spans 204 to 228 (removed in mature form); that stretch reads AAQTPRIPSRLLAILLFLLAMLLTL.

This sequence belongs to the ephrin family. Binds to the receptor tyrosine kinases EPHA2, EPHA3, EPHB1 and EPHB2. Interacts with EPHA8; activates EPHA8. Forms a ternary EFNA5-EPHA3-ADAM10 complex mediating EFNA5 extracellular domain shedding by ADAM10 which regulates the EFNA5-EPHA3 complex internalization and function. In terms of tissue distribution, expressed in brain, heart, placenta and lung.

The protein resides in the cell membrane. The protein localises to the membrane. It is found in the caveola. Cell surface GPI-bound ligand for Eph receptors, a family of receptor tyrosine kinases which are crucial for migration, repulsion and adhesion during neuronal, vascular and epithelial development. Binds promiscuously Eph receptors residing on adjacent cells, leading to contact-dependent bidirectional signaling into neighboring cells. The signaling pathway downstream of the receptor is referred to as forward signaling while the signaling pathway downstream of the ephrin ligand is referred to as reverse signaling. Induces compartmentalized signaling within a caveolae-like membrane microdomain when bound to the extracellular domain of its cognate receptor. This signaling event requires the activity of the Fyn tyrosine kinase. Activates the EPHA3 receptor to regulate cell-cell adhesion and cytoskeletal organization. With the receptor EPHA2 may regulate lens fiber cells shape and interactions and be important for lens transparency maintenance. May function actively to stimulate axon fasciculation. The interaction of EFNA5 with EPHA5 also mediates communication between pancreatic islet cells to regulate glucose-stimulated insulin secretion. Cognate/functional ligand for EPHA7, their interaction regulates brain development modulating cell-cell adhesion and repulsion. This Rattus norvegicus (Rat) protein is Ephrin-A5 (Efna5).